The sequence spans 150 residues: Catabolic 3-dehydroquinase (150 aa).

The active-site Proton acceptor is Tyr24. Substrate-binding residues include Asn75, His81, and Asp88. Residue His101 is the Proton donor of the active site. Substrate is bound by residues 102 to 103 (VS) and Arg112.

The protein belongs to the type-II 3-dehydroquinase family. As to quaternary structure, homododecamer. Adopts a ring-like structure, composed of an arrangement of two hexameric rings stacked on top of one another.

The catalysed reaction is 3-dehydroquinate = 3-dehydroshikimate + H2O. The protein operates within aromatic compound metabolism; 3,4-dihydroxybenzoate biosynthesis; 3,4-dihydroxybenzoate from 3-dehydroquinate: step 1/2. Its function is as follows. Is involved in the catabolism of quinate. Allows the utilization of quinate as carbon source via the beta-ketoadipate pathway. This is Catabolic 3-dehydroquinase from Aspergillus clavatus (strain ATCC 1007 / CBS 513.65 / DSM 816 / NCTC 3887 / NRRL 1 / QM 1276 / 107).